Consider the following 268-residue polypeptide: 4-hydroxy-tetrahydrodipicolinate reductase (268 aa).

Residue G8 to M13 participates in NAD(+) binding. R36 serves as a coordination point for NADP(+). NAD(+) is bound by residues G99–T101 and A123–F126. The active-site Proton donor/acceptor is the H156. Residue H157 participates in (S)-2,3,4,5-tetrahydrodipicolinate binding. Catalysis depends on K160, which acts as the Proton donor. (S)-2,3,4,5-tetrahydrodipicolinate is bound at residue G166–T167.

The protein belongs to the DapB family.

It localises to the cytoplasm. The enzyme catalyses (S)-2,3,4,5-tetrahydrodipicolinate + NAD(+) + H2O = (2S,4S)-4-hydroxy-2,3,4,5-tetrahydrodipicolinate + NADH + H(+). It carries out the reaction (S)-2,3,4,5-tetrahydrodipicolinate + NADP(+) + H2O = (2S,4S)-4-hydroxy-2,3,4,5-tetrahydrodipicolinate + NADPH + H(+). Its pathway is amino-acid biosynthesis; L-lysine biosynthesis via DAP pathway; (S)-tetrahydrodipicolinate from L-aspartate: step 4/4. Functionally, catalyzes the conversion of 4-hydroxy-tetrahydrodipicolinate (HTPA) to tetrahydrodipicolinate. The sequence is that of 4-hydroxy-tetrahydrodipicolinate reductase from Pseudomonas fluorescens (strain ATCC BAA-477 / NRRL B-23932 / Pf-5).